The primary structure comprises 193 residues: Partner of Y14 and mago (193 aa).

Disordered regions lie at residues 1–27 (MSTP…DGTW) and 118–142 (IQEP…TKRL). The span at 122 to 137 (TLPSQSVPTESISQSD) shows a compositional bias: polar residues. Residues 139-192 (TKRLKNLRKKLREIEFLEEKIKAGLLKSPDKDQKEKMSKKNEILNEIDILKNSI) adopt a coiled-coil conformation.

It belongs to the pym family. In terms of assembly, interacts (via N-terminus) with mago and tsu/Y14; the interaction is direct.

The protein localises to the cytoplasm. It localises to the nucleus. In terms of biological role, regulator of the exon junction complex (EJC), a multiprotein complex that associates immediately upstream of the exon-exon junction on mRNAs and serves as a positional landmarks for the intron exon structure of genes and directs post-transcriptional processes in the cytoplasm such as mRNA export, nonsense-mediated mRNA decay (NMD) or translation. This is Partner of Y14 and mago from Bombyx mori (Silk moth).